A 459-amino-acid chain; its full sequence is Cysteine--tRNA ligase (459 aa).

A Zn(2+)-binding site is contributed by C28. A 'HIGH' region motif is present at residues 30-40 (ITIYDYCHIGH). C209, H234, and E238 together coordinate Zn(2+). Residues 266-270 (KMSKS) carry the 'KMSKS' region motif. K269 contacts ATP.

Belongs to the class-I aminoacyl-tRNA synthetase family. In terms of assembly, monomer. Requires Zn(2+) as cofactor.

It localises to the cytoplasm. The catalysed reaction is tRNA(Cys) + L-cysteine + ATP = L-cysteinyl-tRNA(Cys) + AMP + diphosphate. This is Cysteine--tRNA ligase from Pseudoalteromonas translucida (strain TAC 125).